Consider the following 187-residue polypeptide: Probable chorismate pyruvate-lyase (187 aa).

Arginine 80, leucine 118, and glutamate 170 together coordinate substrate.

It belongs to the UbiC family.

It is found in the cytoplasm. The enzyme catalyses chorismate = 4-hydroxybenzoate + pyruvate. It functions in the pathway cofactor biosynthesis; ubiquinone biosynthesis. Its function is as follows. Removes the pyruvyl group from chorismate, with concomitant aromatization of the ring, to provide 4-hydroxybenzoate (4HB) for the ubiquinone pathway. In Pseudomonas fluorescens (strain ATCC BAA-477 / NRRL B-23932 / Pf-5), this protein is Probable chorismate pyruvate-lyase.